A 210-amino-acid polypeptide reads, in one-letter code: Synaptosomal-associated protein 23 (210 aa).

Residue methionine 1 is modified to N-acetylmethionine. 4 positions are modified to phosphoserine: serine 5, serine 20, serine 23, and serine 34. The region spanning histidine 14–leucine 76 is the t-SNARE coiled-coil homology 1 domain. The stretch at serine 23–leucine 76 forms a coiled coil. 5 S-palmitoyl cysteine lipidation sites follow: cysteine 79, cysteine 80, cysteine 83, cysteine 85, and cysteine 87. The tract at residues glycine 104 to serine 135 is disordered. The segment covering asparagine 109–alanine 133 has biased composition (polar residues). 2 positions are modified to phosphoserine: serine 110 and serine 160. Positions aspartate 145 to leucine 207 constitute a t-SNARE coiled-coil homology 2 domain.

The protein belongs to the SNAP-25 family. In terms of assembly, homotetramer (via coiled-coil domain), also forms heterotetramers with STX4 and VAMP3. Found in a complex with VAMP8 and STX1A. Found in a complex with VAMP8 and STX4 in pancreas. Interacts simultaneously with SNAPIN and SYN4. Interacts with STX1A. Interacts with STX12. Interacts tightly to multiple syntaxins and synaptobrevins/VAMPs. Interacts with ZDHHC13 (via ANK repeats). Interacts with ZDHHC17 (via ANK repeats). In terms of processing, (Microbial infection) Targeted and hydrolyzed by C.botulinum neurotoxin type A (BoNT/A, botA) which hydrolyzes the 202-Thr-|-Arg-203 bond; the in vitro reaction is not highly efficient. Post-translationally, (Microbial infection) Targeted and hydrolyzed by C.botulinum neurotoxin type E (BoNT/E) which hydrolyzes the 185-Arg-|-Ile-186 bond; the in vitro reaction is more efficient than that of BoNT/A. Expressed in non-neuronal tissues.

It localises to the cell membrane. The protein resides in the synapse. It is found in the synaptosome. In terms of biological role, essential component of the high affinity receptor for the general membrane fusion machinery and an important regulator of transport vesicle docking and fusion. This chain is Synaptosomal-associated protein 23 (Snap23), found in Mus musculus (Mouse).